The following is a 500-amino-acid chain: Putative beta-glucosidase 5 (500 aa).

The N-terminal stretch at 1–20 is a signal peptide; the sequence is MEQFFALFTIFLSFAFPGRC. A beta-D-glucoside-binding positions include Gln43, His140, and 185–186; that span reads NE. The active-site Proton donor is the Glu186. Cysteines 205 and 212 form a disulfide. A glycan (N-linked (GlcNAc...) asparagine) is linked at Asn216. Tyr328 lines the a beta-D-glucoside pocket. Asn361 is a glycosylation site (N-linked (GlcNAc...) asparagine). Glu394 is a binding site for a beta-D-glucoside. The active-site Nucleophile is Glu394. N-linked (GlcNAc...) asparagine glycosylation occurs at Asn424. A beta-D-glucoside-binding residues include Trp434 and Tyr450. Asn456 and Asn495 each carry an N-linked (GlcNAc...) asparagine glycan.

This sequence belongs to the glycosyl hydrolase 1 family.

It catalyses the reaction Hydrolysis of terminal, non-reducing beta-D-glucosyl residues with release of beta-D-glucose.. This Arabidopsis thaliana (Mouse-ear cress) protein is Putative beta-glucosidase 5.